The following is a 760-amino-acid chain: Catalase-peroxidase (760 aa).

The N-terminal stretch at 1-45 (MKGTPFRSPHLYQEGSSCMHRTIRSVAAVLTVVLSATIPMVPAWS) is a signal peptide. Positions 124 to 245 (WHGAGTYRTY…LAATQMGLIY (122 aa)) form a cross-link, tryptophyl-tyrosyl-methioninium (Trp-Tyr) (with M-271). Residue histidine 125 is the Proton acceptor of the active site. The segment at residues 245-271 (YVNPEGPNGVPDPVAAARDIREAFGGM) is a cross-link (tryptophyl-tyrosyl-methioninium (Tyr-Met) (with W-124)). Heme b is bound at residue histidine 286.

Belongs to the peroxidase family. Peroxidase/catalase subfamily. In terms of assembly, homodimer or homotetramer. Heme b is required as a cofactor. Formation of the three residue Trp-Tyr-Met cross-link is important for the catalase, but not the peroxidase activity of the enzyme.

The enzyme catalyses H2O2 + AH2 = A + 2 H2O. It carries out the reaction 2 H2O2 = O2 + 2 H2O. Functionally, bifunctional enzyme with both catalase and broad-spectrum peroxidase activity. The sequence is that of Catalase-peroxidase from Granulibacter bethesdensis (strain ATCC BAA-1260 / CGDNIH1).